The sequence spans 481 residues: MRALPLTIGTIHFVGIGGIGMSGIAEVLHNLGYAVQGSDISDNQNVRRLREAGIQVMIGHDAANLGTAQVVVISSAVGRDNPEVAAARAKLIPVVRRAEMLAELMRLKWAVAVGGTHGKTTTTSLIAAVLEAAQLDPTVINGGIINAYGTNTRLGAGEWMVVEADESDGSFLRLPAVIAVVTNMDPEHLDHWGTAEAMEAGYQQFVSNIPFYGFAVLCIDHPTVQKMIPQLSDHRIITYGFSPQADVRAERINTDKFGATFEVVITDRQTRRTRRTPPLRLPMLGEHNIANTLAAIAVAVEMGISDSVLQSAFASFKGVKRRFTKTGETGGITIIDDYGHHPVEIAAVLRAARQAGARDVIAVVQPHRYSRLASLFNEFCTCMNDAGTVIVADVYNAGESPIEGVDRDSLVDGLRTSGHKSVVPLPGPEHLAEMIHAIARPGDFVVCLGAGNITAWAQTLPEELATLQAKSSKIRRTGSGG.

Residue 115–121 (GTHGKTT) participates in ATP binding.

This sequence belongs to the MurCDEF family.

It localises to the cytoplasm. It carries out the reaction UDP-N-acetyl-alpha-D-muramate + L-alanine + ATP = UDP-N-acetyl-alpha-D-muramoyl-L-alanine + ADP + phosphate + H(+). The protein operates within cell wall biogenesis; peptidoglycan biosynthesis. Functionally, cell wall formation. This is UDP-N-acetylmuramate--L-alanine ligase from Granulibacter bethesdensis (strain ATCC BAA-1260 / CGDNIH1).